The sequence spans 76 residues: Conotoxin VnMSGL-0112 (76 aa).

The signal sequence occupies residues 1 to 20 (MSGLGIMVLTLLLLVSMATS). Residues 21–45 (HQDGRGKQATQRDAINVRRRRSITR) constitute a propeptide that is removed on maturation. Intrachain disulfides connect Cys-49–Cys-61, Cys-53–Cys-70, and Cys-60–Cys-74.

Belongs to the conotoxin O3 superfamily. As to expression, expressed by the venom duct.

The protein localises to the secreted. This chain is Conotoxin VnMSGL-0112, found in Conus ventricosus (Mediterranean cone).